A 328-amino-acid polypeptide reads, in one-letter code: Ketol-acid reductoisomerase (NADP(+)) (328 aa).

The KARI N-terminal Rossmann domain occupies 1-179 (MRVLYERDGD…GGGAAGIIET (179 aa)). NADP(+)-binding positions include 24–27 (YGSQ), Arg47, and Ser51. His106 is an active-site residue. Residue Gly132 participates in NADP(+) binding. The KARI C-terminal knotted domain maps to 180–325 (TFVDETETDL…ARLRSRMTCA (146 aa)). Residues Asp188, Glu192, Glu224, and Glu228 each contribute to the Mg(2+) site. Position 249 (Ser249) interacts with substrate.

Belongs to the ketol-acid reductoisomerase family. Mg(2+) serves as cofactor.

It catalyses the reaction (2R)-2,3-dihydroxy-3-methylbutanoate + NADP(+) = (2S)-2-acetolactate + NADPH + H(+). The enzyme catalyses (2R,3R)-2,3-dihydroxy-3-methylpentanoate + NADP(+) = (S)-2-ethyl-2-hydroxy-3-oxobutanoate + NADPH + H(+). It participates in amino-acid biosynthesis; L-isoleucine biosynthesis; L-isoleucine from 2-oxobutanoate: step 2/4. The protein operates within amino-acid biosynthesis; L-valine biosynthesis; L-valine from pyruvate: step 2/4. Functionally, involved in the biosynthesis of branched-chain amino acids (BCAA). Catalyzes an alkyl-migration followed by a ketol-acid reduction of (S)-2-acetolactate (S2AL) to yield (R)-2,3-dihydroxy-isovalerate. In the isomerase reaction, S2AL is rearranged via a Mg-dependent methyl migration to produce 3-hydroxy-3-methyl-2-ketobutyrate (HMKB). In the reductase reaction, this 2-ketoacid undergoes a metal-dependent reduction by NADPH to yield (R)-2,3-dihydroxy-isovalerate. This is Ketol-acid reductoisomerase (NADP(+)) from Tremblaya princeps.